The sequence spans 390 residues: Neutrophil cytosol factor 1 (390 aa).

A PX domain is found at 4–125 (TFIRHIALLG…DFFKVRPDDL (122 aa)). SH3 domains are found at residues 156-215 (IILQ…PLDS) and 226-285 (YAGE…KSGQ). The disordered stretch occupies residues 285–390 (QDVSQAQRQI…STKRKLASAV (106 aa)). Phosphoserine is present on residues serine 303 and serine 304. The span at 309-318 (HSIHQRSRKR) shows a compositional bias: basic residues. Residues serine 320, serine 328, serine 345, and serine 348 each carry the phosphoserine modification.

As to quaternary structure, component of the phagocyte NADPH oxidase complex composed of an obligatory core heterodimer formed by the membrane proteins CYBA and CYBB and the cytosolic regulatory subunits NCF1/p47-phox, NCF2/p67-phox, NCF4/p40-phox and the small GTPase RAC1 or RAC2. Part of a cytosolic complex composed at least by NCF1, NCF2 and NCF4. Interacts (via C-terminus) with NCF2 (via the C-terminal SH3 domain). Interacts with NCF4. Interacts with CYBB. Interacts (via the second SH3 domain) with CYBA; interaction is phosphorylation-dependent. Interacts with NOXA1. Interacts with ADAM15. Interacts with TRAF4. Interacts with FASLG. Interacts with PARK7 (via C-terminus); the interaction is enhanced by LPS and modulates NCF1 phosphorylation and membrane translocation. In terms of processing, phosphorylated by PRKCD; phosphorylation induces activation of NCF1, leading to assembly and activation of the NADPH oxidase complex. Detected in peripheral blood monocytes and neutrophils (at protein level).

The protein localises to the cytoplasm. Its subcellular location is the cytosol. The protein resides in the membrane. In terms of biological role, subunit of the phagocyte NADPH oxidase complex that mediates the transfer of electrons from cytosolic NADPH to O2 to produce the superoxide anion (O2(-)). In the activated complex, electrons are first transferred from NADPH to flavin adenine dinucleotide (FAD) and subsequently transferred via two heme molecules to molecular oxygen, producing superoxide through an outer-sphere reaction. Activation of the NADPH oxidase complex is initiated by the assembly of cytosolic subunits of the NADPH oxidase complex with the core NADPH oxidase complex to form a complex at the plasma membrane or phagosomal membrane. This activation process is initiated by phosphorylation dependent binding of the cytosolic NCF1/p47-phox subunit to the C-terminus of CYBA/p22-phox. This Homo sapiens (Human) protein is Neutrophil cytosol factor 1.